We begin with the raw amino-acid sequence, 214 residues long: Charged multivesicular body protein 2b (214 aa).

The stretch at 25-55 forms a coiled coil; it reads QRTITRDRAALEKQERQLELEIKKMAKTGNK. The disordered stretch occupies residues 179-201; that stretch reads AKAPSAARGLPSASTSKASTISD. Polar residues predominate over residues 190-199; the sequence is SASTSKASTI. An MIT-interacting motif motif is present at residues 202–212; that stretch reads EEIERQLKALG.

The protein belongs to the SNF7 family. In terms of assembly, probable core component of the endosomal sorting required for transport complex III (ESCRT-III). ESCRT-III components are thought to multimerize to form a flat lattice on the perimeter membrane of the endosome.

It is found in the cytoplasm. Its subcellular location is the cytosol. The protein resides in the late endosome membrane. Functionally, probable core component of the endosomal sorting required for transport complex III (ESCRT-III) which is involved in multivesicular bodies (MVBs) formation and sorting of endosomal cargo proteins into MVBs. MVBs contain intraluminal vesicles (ILVs) that are generated by invagination and scission from the limiting membrane of the endosome and mostly are delivered to lysosomes enabling degradation of membrane proteins, such as stimulated growth factor receptors, lysosomal enzymes and lipids. The sequence is that of Charged multivesicular body protein 2b (CHMP2B) from Gallus gallus (Chicken).